Consider the following 94-residue polypeptide: Trp operon repressor homolog (94 aa).

A DNA-binding region spans residues 58–81 (QREIAEKYGVSIAQITRGSNALKG).

The protein belongs to the TrpR family. As to quaternary structure, homodimer.

Its subcellular location is the cytoplasm. Functionally, this protein is an aporepressor. When complexed with L-tryptophan it binds the operator region of the trp operon and prevents the initiation of transcription. The sequence is that of Trp operon repressor homolog from Chlamydia trachomatis serovar A (strain ATCC VR-571B / DSM 19440 / HAR-13).